The sequence spans 413 residues: Ras association domain-containing protein 5 (413 aa).

Residues 1–103 (MASPAIGQRP…RPRDVRSIFE (103 aa)) form a disordered region. Over residues 52–74 (SEDRGGRRSGRRDPEPTPRDCRH) the composition is skewed to basic and acidic residues. Residues 117-165 (GHRFVELALRGGPGWCDLCGREVLRQALRCANCKFTCHSECRSLIQLDC) form a Phorbol-ester/DAG-type zinc finger. 2 positions are modified to phosphoserine: S177 and S274. Residues 265 to 359 (PAATTDKRTS…LSFVLKENET (95 aa)) enclose the Ras-associating domain. Residue T347 is modified to Phosphothreonine. Positions 361 to 408 (EVEWDAFSIPELQNFLTILEKEEQDKIHQLQKKYNKFRQKLEEALRES) constitute an SARAH domain.

As to quaternary structure, interacts directly with activated HRAS; a RASSF5-STK4/MST1 complex probably associates with activated HRAS. Interacts with KRAS. Probably interacts with Ras-like GTPases RRAS, MRAS, RAP1B, RAP2A and RALA. Interacts with RRAS2. Can self-associate. Interacts with RSSF1 isoform A. The RSSF1 isoform A-RSSF5 heterodimer probably mediates the association of RSSF1 with HRAS. Isoform 2 interacts with activated RAP1A and ITGAL/LFA-1. Binds STK4/MST1, inhibiting STK4/MST1 autoactivation.

It is found in the cytoplasm. The protein localises to the cytoskeleton. In terms of biological role, potential tumor suppressor. Seems to be involved in lymphocyte adhesion by linking RAP1A activation upon T-cell receptor or chemokine stimulation to integrin activation. Isoform 2 stimulates lymphocyte polarization and the patch-like distribution of ITGAL/LFA-1, resulting in an enhanced adhesion to ICAM1. Together with RAP1A may participate in regulation of microtubule growth. The association of isoform 2 with activated RAP1A is required for directional movement of endothelial cells during wound healing. May be involved in regulation of Ras apoptotic function. The RASSF5-STK4/MST1 complex may mediate HRAS and KRAS induced apoptosis. This is Ras association domain-containing protein 5 (Rassf5) from Mus musculus (Mouse).